The chain runs to 176 residues: MENNSSPESSEEIVKQNGIVSNQLSQDGITNESLGNDHIGVEILSVKPEKLYEAISTLRGYGFNYLQCQGGYDEGPGKCLVSFYHLISLGDIQDIKEIKEIRVKVFLNRDSDLSVPSLYKIFKGSDWQERETYDMFGINFADHPNPTRLLMPEDWRGWPLRKDYIQPDFYELQDAY.

Belongs to the complex I 30 kDa subunit family. NDH-1 can be composed of about 15 different subunits; different subcomplexes with different compositions have been identified which probably have different functions.

It localises to the cellular thylakoid membrane. It catalyses the reaction a plastoquinone + NADH + (n+1) H(+)(in) = a plastoquinol + NAD(+) + n H(+)(out). The enzyme catalyses a plastoquinone + NADPH + (n+1) H(+)(in) = a plastoquinol + NADP(+) + n H(+)(out). NDH-1 shuttles electrons from an unknown electron donor, via FMN and iron-sulfur (Fe-S) centers, to quinones in the respiratory and/or the photosynthetic chain. The immediate electron acceptor for the enzyme in this species is believed to be plastoquinone. Couples the redox reaction to proton translocation, and thus conserves the redox energy in a proton gradient. Cyanobacterial NDH-1 also plays a role in inorganic carbon-concentration. The protein is NAD(P)H-quinone oxidoreductase subunit J of Prochlorococcus marinus subsp. pastoris (strain CCMP1986 / NIES-2087 / MED4).